A 101-amino-acid polypeptide reads, in one-letter code: Chaperone modulatory protein CbpM (101 aa).

It belongs to the CbpM family.

Its function is as follows. Interacts with CbpA and inhibits both the DnaJ-like co-chaperone activity and the DNA binding activity of CbpA. Together with CbpA, modulates the activity of the DnaK chaperone system. Does not inhibit the co-chaperone activity of DnaJ. This Salmonella agona (strain SL483) protein is Chaperone modulatory protein CbpM.